A 429-amino-acid chain; its full sequence is MGKNVVVLGSQWGDEGKGKIVDLLTEKASAVARFQGGHNAGHTLVVDGKTTILHLIPSGILREGVTCFIGNGVVLAPDALLKEMKNLEDNNVPVRERLRISPNCPLIMPYHVALDQAREAKRGSGKIGTTGRGIGPAYEDKVARRAIKLADLFRDDLEEKLRNLIEYHNFQLTQYYKVEAIDFDETLKLCQEWKEAIRGMVTDVTEDLNQLRLAGKNLMFEGAQGTLLDIDHGTYPFVTSSSVTAGGVSTGTGIGPLYLDYVLGITKAYTTRVGSGPFPTELFDDVGAHLAKVGHEFGATTGRARRCGWFDAEALRRAVVLNSMSGICLTKLDVLDGLEELLIGVGYNLPETECAGAHDAEFYESVTPKYETLQGWSESTVGITNYDELPENAKKYIKRIEVLIGCPIDIISTGPDREETIVLRDPYDA.

Residues 13–19 (GDEGKGK) and 41–43 (GHT) each bind GTP. Residue Asp14 is the Proton acceptor of the active site. Residues Asp14 and Gly41 each coordinate Mg(2+). Residues 14-17 (DEGK), 39-42 (NAGH), Thr130, Arg144, Gln224, Thr239, and Arg303 contribute to the IMP site. His42 serves as the catalytic Proton donor. 299 to 305 (ATTGRAR) is a binding site for substrate. Residues Arg305, 331–333 (KLD), and 412–414 (STG) each bind GTP.

It belongs to the adenylosuccinate synthetase family. In terms of assembly, homodimer. Mg(2+) serves as cofactor.

Its subcellular location is the cytoplasm. The enzyme catalyses IMP + L-aspartate + GTP = N(6)-(1,2-dicarboxyethyl)-AMP + GDP + phosphate + 2 H(+). Its pathway is purine metabolism; AMP biosynthesis via de novo pathway; AMP from IMP: step 1/2. Its function is as follows. Plays an important role in the de novo pathway of purine nucleotide biosynthesis. Catalyzes the first committed step in the biosynthesis of AMP from IMP. This chain is Adenylosuccinate synthetase, found in Psychrobacter arcticus (strain DSM 17307 / VKM B-2377 / 273-4).